A 922-amino-acid chain; its full sequence is MPHKIGFVVVSSSGHEDGFSARELMIHAPTVSGWRSPKFCQFPQEIVLQMVERCRIRKLQLLAHQYMISSKVEFYISESLPEYLVPYQAERFRRLGYVSLCDNEKTGCKARELKSVYVDAVGQFLKLIFHQTTNKYNVNQVALVAINIIGDPADLGDESNTTCREKLIDHYLGHSPHNPEDPALDGTFAGRSDYISPLDDLAFDMYQDPEVAQIIRRLDERKREAAKKERYDHAKKLKQAIADLQKVGERLGRYEVEKRRAVEKEDYDLAKEKKQQMARYRAQVYEQLELHGLLQGEPEMQRPFALPLQPLASPSSPQHWKAVSSLPRTEELAAEDTCAGPILQEKPLASSPRHSAVDRSPPAAGPAPRSHVEALPYDERPLPVTRKQLEEPSAEPEVREADSDVRRRGVSAEPEPLTEKALREASSAIDTLGEALVAGAYSKMWSCREDALLALYKRLMEMPVGTQKEDLKNMLRASVFLIRRAIKDIVTSVFQASLKLLKMIITQYIPKHKLGKLDTTYCVERAIPLLLARTGDSSARLRVMALNFIQEMALFKEVRSLQLIPSYLVQPLKTNASVHLAMSQVDLLARLLRDLGTEGSGFTVDNVMKFAVSALEHRVYEVRETAVRIILDMYRQHPALTLEHLPPDDSTTRRNLLYKAIFEGFAKIDGRPTEAEGKTQKRVVTKEAEKQKKEETKALQGLSAAPRETQAGVQEKENEAVKLKNQDPQGRKAAPPDTPEIPDNHYLDNLCIFCGERNESFTEEGLDLHYWKHCLMLTRCDHCRQVVEISSLTEHLLTECDKRDGFGKCPRCSEAVPKEELPRHIKTKECNPAKSEKVANRCPLCHENFAPGEEAWKVHLMGSAGCTMNLRKTHILCKAPAPQQGKGPMASKSGTSAPKVGSKIPTPKGGLSKSSSRTHTRR.

Residues 210–277 (EVAQIIRRLD…DLAKEKKQQM (68 aa)) are a coiled coil. A compositionally biased stretch (low complexity) spans 307–318 (PLQPLASPSSPQ). 2 disordered regions span residues 307–333 (PLQP…EELA) and 348–419 (LASS…PLTE). The segment covering 396 to 407 (PEVREADSDVRR) has biased composition (basic and acidic residues). 2 HEAT repeats span residues 526–564 (AIPL…LQLI) and 601–637 (GFTV…YRQH). 2 stretches are compositionally biased toward basic and acidic residues: residues 673–697 (TEAE…EETK) and 714–725 (QEKENEAVKLKN). Disordered regions lie at residues 673–741 (TEAE…TPEI) and 880–922 (PAPQ…HTRR). A coiled-coil region spans residues 678-705 (KTQKRVVTKEAEKQKKEETKALQGLSAA).

As to quaternary structure, interacts with CCP110 and CEP97. Interacts with ARMC9, TOGARAM1, CCDC66 and CSPP1. Expressed predominantly in the brain. Also detected, although at much lower levels, in the heart and the liver. Within the brain, expressed in the cerebral cortex, hippocampus, cerebellum and brainstem.

The protein resides in the cell projection. It localises to the cilium. It is found in the cytoplasm. Its subcellular location is the cytoskeleton. The protein localises to the microtubule organizing center. The protein resides in the centrosome. It localises to the centriole. It is found in the spindle pole. Required for ciliogenesis and for structural integrity at the ciliary tip. In Rattus norvegicus (Rat), this protein is Centrosomal protein of 104 kDa (Cep104).